A 198-amino-acid chain; its full sequence is Iron-sulfur flavoprotein MJ0731 (198 aa).

Positions 46, 49, 52, and 59 each coordinate [4Fe-4S] cluster.

This sequence belongs to the SsuE family. Isf subfamily. As to quaternary structure, homodimer. The cofactor is FMN. Requires [4Fe-4S] cluster as cofactor.

Redox-active protein probably involved in electron transport. This chain is Iron-sulfur flavoprotein MJ0731, found in Methanocaldococcus jannaschii (strain ATCC 43067 / DSM 2661 / JAL-1 / JCM 10045 / NBRC 100440) (Methanococcus jannaschii).